Consider the following 809-residue polypeptide: E3 ubiquitin-protein ligase RSP5 (809 aa).

The C2 domain occupies 1 to 105 (MPSSISVKLV…GHLDEDTATS (105 aa)). Disordered stretches follow at residues 99–122 (DEDT…KKSN), 139–240 (PSSS…RRTD), and 257–298 (WKRP…DNSS). A compositionally biased stretch (basic and acidic residues) spans 108 to 122 (RPREETITRDLKKSN). Residues 139–148 (PSSSPHSQAP) show a composition bias toward polar residues. The segment covering 149 to 183 (SGHTASSSTNTSSTTRTNGHSTSSTRNHSTSHPSR) has biased composition (low complexity). Over residues 184-196 (GTAQAVESTLQSG) the composition is skewed to polar residues. Low complexity predominate over residues 197 to 219 (TTAATNTATTSHRSTNSTSSATR). WW domains follow at residues 229 to 262 (GRLP…RPTL), 331 to 364 (GELP…DPRR), and 387 to 420 (GPLP…DPRL). A Glycyl lysine isopeptide (Lys-Gly) (interchain with G-Cter in ubiquitin) cross-link involves residue Lys-258. Residues 705–809 (YRGYQESDEV…VEETIGFGQE (105 aa)) form the HECT domain. The Glycyl thioester intermediate role is filled by Cys-777.

This sequence belongs to the RSP5/NEDD4 family. Component of the RSP5-BUL1/2 ubiquitin ligase complex composed of at least RSP5 and BUL1 or BUL2. Component of the RSP5-UBA1-UBC5 ubiquitin ligase complex composed of E3 RSP5, E1 UBA1 and E2 UBC5. Also forms a ternary complex with RUP1 and UBP2. Interacts (via WW domains) with LSB1. Interacts (via WW domains) with PIN3/LSB2. Interacts (via WW domains) with RCR1 (via PY motifs). Interacts with UBP2; the interaction is direct. Interacts with HSE1. Interacts with LAS17. Interacts with ROG3. Interacts with ROD1. Interacts with RVS167. Interacts with ubiquitin. Post-translationally, the ubiquitination appears to be the result of an intramolecular transfer of ubiquitin.

The protein localises to the cytoplasm. It localises to the nucleus. Its subcellular location is the cytoskeleton. The protein resides in the actin patch. It catalyses the reaction S-ubiquitinyl-[E2 ubiquitin-conjugating enzyme]-L-cysteine + [acceptor protein]-L-lysine = [E2 ubiquitin-conjugating enzyme]-L-cysteine + N(6)-ubiquitinyl-[acceptor protein]-L-lysine.. The protein operates within protein modification; protein ubiquitination. E3 ubiquitin-protein ligase which accepts ubiquitin from an E2 ubiquitin-conjugating enzyme in the form of a thioester and then directly transfers the ubiquitin to targeted substrates. Component of a RSP5 ubiquitin ligase complex which specifies polyubiquitination and intracellular trafficking of the general amino acid permease GAP1 as well as other cell surface proteins like GAP1, FUR4, MAL61, PMA1 and STE2. The RSP5-BUL1/2 complex is also necessary for the heat-shock element (HSE)-mediated gene expression, nitrogen starvation GLN3-dependent transcription, pressure-induced differential regulation of the two tryptophan permeases TAT1 and TAT2 and sorting efficiency into multivesicular bodies. The RSP5-UBA1-UBC5 ubiquitin ligase complex ubiquitinates RPO21 forming 'Lys-63'-linked polyubiquitin chains. Plays a role in tolerance to o-dinitrobenzene. Involved in actin cytoskeleton organization and dynamics. Ubiquitinates the LAS17-binding proteins LSB1 and PIN3/LSB2 without directing them for degradation and affects LAS17 levels in a SLA1-dependent and LSB1/2-independent manner. Also involved in the degradation of non-functional 18S rRNAs in response to stalled ribosomes by mediating polyubiquitination of monoubiquitinated RPS3/uS3: mediates formation of 'Lys-63'-linked polyubiquitin chains on monoubiquitined RPS3/uS3, promoting the degradation of non-functional 18S rRNAs. The polypeptide is E3 ubiquitin-protein ligase RSP5 (RSP5) (Saccharomyces cerevisiae (strain ATCC 204508 / S288c) (Baker's yeast)).